The chain runs to 319 residues: Pre T-cell antigen receptor alpha (319 aa).

The signal sequence occupies residues 1–16 (MAESWLLLLLALGCPA). At 17-160 (LPTEVTTLLR…LRGTRALVLR (144 aa)) the chain is on the extracellular side. A disulfide bridge links cysteine 58 with cysteine 118. Asparagine 78 is a glycosylation site (N-linked (GlcNAc...) asparagine). The helical transmembrane segment at 161-181 (LGALRLLLFKLLLLDVLLTCG) threads the bilayer. The Cytoplasmic segment spans residues 182–319 (RLHAPPAARG…PPADPSFPGG (138 aa)). A compositionally biased stretch (low complexity) spans 189–207 (ARGDPAGASGPGAPSLPAP). A disordered region spans residues 189–293 (ARGDPAGASG…VLRAWSSGPS (105 aa)). Residues 260 to 271 (RRRRVHTRRPRR) show a composition bias toward basic residues.

Heterodimer with TCRB; disulfide linked. This heterodimer assembles with CD3 proteins into a signaling-competent pre-T-cell receptor complex. Interacts with RHBDD1.

The protein localises to the membrane. Its subcellular location is the cell membrane. Component of the pre-T-cell receptor complex (composed of PTCRA, TCRB and the CD3 complex) that has a crucial role in early T-cell development, particularly alpha-beta T cell differentiation. In Bos taurus (Bovine), this protein is Pre T-cell antigen receptor alpha (PTCRA).